Here is a 1414-residue protein sequence, read N- to C-terminus: DNA-directed RNA polymerase subunit beta' (1414 aa).

Residues Cys-70, Cys-72, Cys-85, and Cys-88 each contribute to the Zn(2+) site. 3 residues coordinate Mg(2+): Asp-460, Asp-462, and Asp-464. Zn(2+) contacts are provided by Cys-814, Cys-888, Cys-895, and Cys-898. A compositionally biased stretch (low complexity) spans 1392-1403; the sequence is EQALSEALKSSA. Residues 1392 to 1414 are disordered; that stretch reads EQALSEALKSSAPQEAKAAQKDE.

Belongs to the RNA polymerase beta' chain family. The RNAP catalytic core consists of 2 alpha, 1 beta, 1 beta' and 1 omega subunit. When a sigma factor is associated with the core the holoenzyme is formed, which can initiate transcription. Mg(2+) is required as a cofactor. Requires Zn(2+) as cofactor.

The catalysed reaction is RNA(n) + a ribonucleoside 5'-triphosphate = RNA(n+1) + diphosphate. Functionally, DNA-dependent RNA polymerase catalyzes the transcription of DNA into RNA using the four ribonucleoside triphosphates as substrates. This is DNA-directed RNA polymerase subunit beta' from Coxiella burnetii (strain Dugway 5J108-111).